The sequence spans 310 residues: p-hydroxybenzoic acid efflux pump subunit AaeA (310 aa).

A helical transmembrane segment spans residues 12–32 (AITVILVILAFVAIFRAWVYY).

It belongs to the membrane fusion protein (MFP) (TC 8.A.1) family.

The protein resides in the cell inner membrane. Functionally, forms an efflux pump with AaeB. The chain is p-hydroxybenzoic acid efflux pump subunit AaeA from Klebsiella pneumoniae (strain 342).